The following is a 380-amino-acid chain: Probable protein phosphatase 2C 2 (380 aa).

Residues 122-376 (GYSVYCKRGK…DDISVMLIQL (255 aa)) enclose the PPM-type phosphatase domain. Mn(2+)-binding residues include Asp-158, Gly-159, Asp-321, and Asp-367.

This sequence belongs to the PP2C family. Mg(2+) is required as a cofactor. Requires Mn(2+) as cofactor.

It carries out the reaction O-phospho-L-seryl-[protein] + H2O = L-seryl-[protein] + phosphate. The catalysed reaction is O-phospho-L-threonyl-[protein] + H2O = L-threonyl-[protein] + phosphate. This chain is Probable protein phosphatase 2C 2, found in Arabidopsis thaliana (Mouse-ear cress).